A 555-amino-acid chain; its full sequence is 2-succinyl-5-enolpyruvyl-6-hydroxy-3-cyclohexene-1-carboxylate synthase (555 aa).

This sequence belongs to the TPP enzyme family. MenD subfamily. As to quaternary structure, homodimer. The cofactor is Mg(2+). It depends on Mn(2+) as a cofactor. Thiamine diphosphate serves as cofactor.

The catalysed reaction is isochorismate + 2-oxoglutarate + H(+) = 5-enolpyruvoyl-6-hydroxy-2-succinyl-cyclohex-3-ene-1-carboxylate + CO2. Its pathway is quinol/quinone metabolism; 1,4-dihydroxy-2-naphthoate biosynthesis; 1,4-dihydroxy-2-naphthoate from chorismate: step 2/7. It participates in quinol/quinone metabolism; menaquinone biosynthesis. Functionally, catalyzes the thiamine diphosphate-dependent decarboxylation of 2-oxoglutarate and the subsequent addition of the resulting succinic semialdehyde-thiamine pyrophosphate anion to isochorismate to yield 2-succinyl-5-enolpyruvyl-6-hydroxy-3-cyclohexene-1-carboxylate (SEPHCHC). The polypeptide is 2-succinyl-5-enolpyruvyl-6-hydroxy-3-cyclohexene-1-carboxylate synthase (Bacteroides fragilis (strain ATCC 25285 / DSM 2151 / CCUG 4856 / JCM 11019 / LMG 10263 / NCTC 9343 / Onslow / VPI 2553 / EN-2)).